Here is a 418-residue protein sequence, read N- to C-terminus: UDP-N-acetylglucosamine 1-carboxyvinyltransferase (418 aa).

Phosphoenolpyruvate is bound at residue 22-23 (KN). Residue R92 coordinates UDP-N-acetyl-alpha-D-glucosamine. C116 (proton donor) is an active-site residue. C116 is modified (2-(S-cysteinyl)pyruvic acid O-phosphothioketal). Positions 305 and 327 each coordinate UDP-N-acetyl-alpha-D-glucosamine.

This sequence belongs to the EPSP synthase family. MurA subfamily.

The protein resides in the cytoplasm. The enzyme catalyses phosphoenolpyruvate + UDP-N-acetyl-alpha-D-glucosamine = UDP-N-acetyl-3-O-(1-carboxyvinyl)-alpha-D-glucosamine + phosphate. It participates in cell wall biogenesis; peptidoglycan biosynthesis. Cell wall formation. Adds enolpyruvyl to UDP-N-acetylglucosamine. This Endomicrobium trichonymphae protein is UDP-N-acetylglucosamine 1-carboxyvinyltransferase.